We begin with the raw amino-acid sequence, 104 residues long: L-rhamnose mutarotase (104 aa).

A substrate-binding site is contributed by Tyr18. Residue His22 is the Proton donor of the active site. Substrate is bound by residues Tyr41 and 76-77; that span reads WW.

It belongs to the rhamnose mutarotase family. In terms of assembly, homodimer.

The protein resides in the cytoplasm. It carries out the reaction alpha-L-rhamnose = beta-L-rhamnose. The protein operates within carbohydrate metabolism; L-rhamnose metabolism. Functionally, involved in the anomeric conversion of L-rhamnose. The chain is L-rhamnose mutarotase from Shigella dysenteriae serotype 1 (strain Sd197).